The chain runs to 383 residues: Succinyl-diaminopimelate desuccinylase (383 aa).

Residue histidine 72 coordinates Zn(2+). Residue aspartate 74 is part of the active site. Residue aspartate 105 coordinates Zn(2+). Catalysis depends on glutamate 139, which acts as the Proton acceptor. Residues glutamate 140, glutamate 168, and histidine 356 each contribute to the Zn(2+) site.

Belongs to the peptidase M20A family. DapE subfamily. Homodimer. The cofactor is Zn(2+). Co(2+) serves as cofactor.

The catalysed reaction is N-succinyl-(2S,6S)-2,6-diaminopimelate + H2O = (2S,6S)-2,6-diaminopimelate + succinate. The protein operates within amino-acid biosynthesis; L-lysine biosynthesis via DAP pathway; LL-2,6-diaminopimelate from (S)-tetrahydrodipicolinate (succinylase route): step 3/3. Catalyzes the hydrolysis of N-succinyl-L,L-diaminopimelic acid (SDAP), forming succinate and LL-2,6-diaminopimelate (DAP), an intermediate involved in the bacterial biosynthesis of lysine and meso-diaminopimelic acid, an essential component of bacterial cell walls. This Beijerinckia indica subsp. indica (strain ATCC 9039 / DSM 1715 / NCIMB 8712) protein is Succinyl-diaminopimelate desuccinylase.